The following is a 363-amino-acid chain: MTQLVPLAELPSGKKIYSVRGQRFEVDRQYDLVKVVGFGACGTVCSAVVNGSGERVAIKRLSRVFGDLREGKRILREMEIMTSLKHNNLIRLHHFMRPQSKETFEDIYLVMDLYDTDLNRIIRSRQKLTDEHLQYFMIQAFRGLHYLHSAKVMHRDLKPSNLLVNADCALAICDFGLARDDQVMSSSDLTQYVVTRWYRPPEVLGMGSNQYTSAVDVWSLGLIFAELMVGRALLPGTDYIGQLVMIVNLLGSPSIDDMEFLSSEAKAFILSQPHRPALSFRDLFPMATEEATDLLSKLLVFHPARRLTAKQVMEHPYFSKYRDAAEEADAPDPFVWNHSHIETKEQLREDLWRVVEAHSQLNE.

Residues 30–318 form the Protein kinase domain; that stretch reads YDLVKVVGFG…AKQVMEHPYF (289 aa). Residues 36–44 and Lys-59 contribute to the ATP site; that span reads VGFGACGTV. Asp-156 acts as the Proton acceptor in catalysis. Residues Ser-186 and Ser-187 each carry the phosphoserine modification. At Thr-190 the chain carries Phosphothreonine; by MKK5. Positions 190 to 192 match the TQY motif; the sequence is TQY. Tyr-192 carries the phosphotyrosine; by MKK5 modification.

This sequence belongs to the protein kinase superfamily. CMGC Ser/Thr protein kinase family. MAP kinase subfamily. Mg(2+) serves as cofactor. Post-translationally, dually phosphorylated on Thr-190 and Tyr-192, which activates the enzyme.

The enzyme catalyses L-seryl-[protein] + ATP = O-phospho-L-seryl-[protein] + ADP + H(+). It catalyses the reaction L-threonyl-[protein] + ATP = O-phospho-L-threonyl-[protein] + ADP + H(+). Essential for the two main proliferating life stages, the promastigotes and amastigotes, of the parasite. The polypeptide is Mitogen-activated protein kinase 4 (Leishmania mexicana).